Reading from the N-terminus, the 48-residue chain is Large ribosomal subunit protein eL40 (48 aa).

Belongs to the eukaryotic ribosomal protein eL40 family.

The sequence is that of Large ribosomal subunit protein eL40 from Methanoculleus marisnigri (strain ATCC 35101 / DSM 1498 / JR1).